A 496-amino-acid polypeptide reads, in one-letter code: Acetyltransferase adrJ (496 aa).

Residues His174 and Asp421 each act as proton acceptor in the active site.

It belongs to the plant acyltransferase family. Monomer.

The protein operates within secondary metabolite biosynthesis; terpenoid biosynthesis. Its function is as follows. Acetyltransferase; part of the gene cluster that mediates the biosynthesis of andrastins, meroterpenoid compounds that exhibit inhibitory activity against ras farnesyltransferase, suggesting that they could be promising leads for antitumor agents. The first step of the pathway is the synthesis of 3,5-dimethylorsellinic acid (DMOA) by the polyketide synthase adrD via condensation of one acetyl-CoA starter unit with 3 malonyl-CoA units and 2 methylations. DMAO is then converted to farnesyl-DMAO by the prenyltransferase adrG. The methyltransferase adrK catalyzes the methylation of the carboxyl group of farnesyl-DMAO to farnesyl-DMAO methyl ester which is further converted to epoxyfarnesyl-DMAO methyl ester by the FAD-dependent monooxygenase adrH. The terpene cyclase adrI then catalyzes the carbon skeletal rearrangement to generate the andrastin E, the first compound in the pathway having the andrastin scaffold, with the tetracyclic ring system. The post-cyclization tailoring enzymes adrF, adrE, adrJ, and adrA, are involved in the conversion of andrastin E into andrastin A. The short chain dehydrogenase adrF is responsible for the oxidation of the C-3 a hydroxyl group of andrastin E to yield the corresponding ketone, andrastin D. The ketoreductase adrE stereoselectively reduces the carbonyl moiety to reverse the stereochemistry of the C-3 position to yield andrastin F. The acetyltransferase adrJ is the acetyltransferase that attaches the acetyl group to the C-3 hydroxyl group of andrastin F to yield andrastin C. Finally, the cytochrome P450 monooxygenase adrA catalyzes two sequential oxidation reactions of the C-23 methyl group, to generate the corresponding alcohol andrastin B, and aldehyde andrastin A. This Penicillium roqueforti protein is Acetyltransferase adrJ.